The sequence spans 158 residues: Transcription elongation factor GreA (158 aa).

Belongs to the GreA/GreB family.

Necessary for efficient RNA polymerase transcription elongation past template-encoded arresting sites. The arresting sites in DNA have the property of trapping a certain fraction of elongating RNA polymerases that pass through, resulting in locked ternary complexes. Cleavage of the nascent transcript by cleavage factors such as GreA or GreB allows the resumption of elongation from the new 3'terminus. GreA releases sequences of 2 to 3 nucleotides. This Sinorhizobium medicae (strain WSM419) (Ensifer medicae) protein is Transcription elongation factor GreA.